The primary structure comprises 490 residues: 5'-3' exonuclease PLD3 (490 aa).

The Cytoplasmic portion of the chain corresponds to 1–38 (MKPKLMYQELKVPAEEPASELPMNEIEAWKAAEKKARW). Residues 39-59 (VLLVLILAVVGFGALMTQLFL) form a helical; Signal-anchor for type II membrane protein membrane-spanning segment. At 60 to 490 (WEYGDLHLFG…DSVGNACRLL (431 aa)) the chain is on the lumenal side. 2 disulfide bridges follow: Cys-77-Cys-239 and Cys-81-Cys-237. N-linked (GlcNAc...) asparagine glycans are attached at residues Asn-97 and Asn-132. A PLD phosphodiesterase 1 domain is found at 196–223 (THGVLHTKFWVVDQTHFYLGSANMDWRS). Active-site residues include His-201, Lys-203, and Asp-208. His-201 (proton donor) is an active-site residue. Residues His-201 and Lys-203 each coordinate phosphate. Asn-218 contributes to the phosphate binding site. Residues Asn-236, Asn-284, and Asn-387 are each glycosylated (N-linked (GlcNAc...) asparagine). The cysteines at positions 366 and 487 are disulfide-linked. The region spanning 411 to 437 (YARVNHNKYMVTERATYIGTSNWSGSY) is the PLD phosphodiesterase 2 domain. His-416 serves as a coordination point for phosphate. The Nucleophile role is filled by His-416. A Mg(2+)-binding site is contributed by Phe-438.

The protein belongs to the phospholipase D family. In terms of assembly, homodimer. Interacts with APP. N-glycosylated. In terms of processing, proteolytically processed to a soluble form that is stable within endosomes and lysosomes. During transport through the secretory pathway becomes proteolysed by cysteine proteases, thereby releasing a stable soluble lysosomal lumenal polypeptide, whereas the transmembrane-bound fragment is rapidly degraded. Its transport route to lysosomes involves ubiquitination and the ESCRT complex. Post-translationally, ubiquitinated. Ubiquitination mediates sorting into lysosomes.

Its subcellular location is the endoplasmic reticulum membrane. It is found in the lysosome lumen. The protein resides in the early endosome membrane. The protein localises to the late endosome membrane. It localises to the golgi apparatus membrane. Its subcellular location is the endosome membrane. It catalyses the reaction Exonucleolytic cleavage in the 5'- to 3'-direction to yield nucleoside 3'-phosphates.. The enzyme catalyses a 5'-end 5'-dephospho-ribonucleotidyl-ribonucleotide-RNA + H2O = a ribonucleoside 3'-phosphate + a 5'-end dephospho-ribonucleoside-RNA + H(+). It carries out the reaction a ribonucleoside 3'-phosphate-2'-3'-cyclophospho-GMP + H2O = a ribonucleoside 3'-phosphate + 2',3'-cyclophospho-GMP + H(+). The catalysed reaction is a 5'-end 5'-dephospho-2'-deoxyribonucleotidyl-2'-deoxyribonucleotide in single-stranded DNA + H2O = a 5'-end dephospho-2'-deoxyribonucleoside in single-stranded DNA + a 2'-deoxyribonucleoside 3'-phosphate + H(+). It catalyses the reaction a 5'-end 5'-phospho-2'-deoxyribonucleotide in single-stranded DNA + H2O = a 5'-end 5'-dephospho-2'-deoxyribonucleotide in single-stranded DNA + phosphate. The enzyme catalyses a 3-lyso-sn-glycero-1-phospho-(3'-acyl-1'-sn-glycerol) + a 1-acyl-sn-glycerol = a 3-acyl-sn-glycero-1-phospho-(3'-acyl-1'-sn-glycerol) + glycerol. It carries out the reaction 3-lyso-sn-glycero-1-phospho-(3'-(9Z-octadecenoyl)-1'-sn-glycerol) + 1-(9Z-octadecenoyl)-sn-glycerol = 3-(9Z-octadecenoyl)-sn-glycero-1-phospho-(3'-(9Z-octadecenoyl)-1'-sn-glycerol) + glycerol. Functionally, 5'-&gt;3' exonuclease that hydrolyzes the phosphodiester bond of single-stranded DNA (ssDNA) and RNA molecules to form nucleoside 3'-monophosphates and 5'-end 5'-hydroxy deoxyribonucleotide/ribonucleotide fragments. Partially redundant with PLD4, can cleave all four nucleotides displaying higher efficiency for ssDNA and RNA fragments initiated with uridine and guanosine residues and lower efficiency for cytidine-initiated substrates. As a result, it does not always degrade polynucleotides to the single nucleotide level, it can stall at specific sites sparing certain fragments from exonucleolytic degradation. Processes self and pathogenic ssDNA and RNA molecules that reach the endolysosomal compartment via phagocytosis or autophagy and may serve as 'danger' signals for recognition by innate immune receptors such as toll-like receptors (TLRs). Degrades mitochondrial CpG-rich ssDNA fragments to prevent TLR9 activation and autoinflammatory response, but it can cleave viral RNA to generate ligands for TLR7 activation and initiate antiviral immune responses. In plasmacytoid dendritic cells, it cooperates with endonuclease RNASET2 to release 2',3'-cyclic guanosine monophosphate (2',3'-cGMP), a potent stimulatory ligand for TLR7. Produces 2',3'-cGMPs and cytidine-rich RNA fragments that occupy TLR7 ligand-binding pockets and trigger a signaling-competent state. Can exert polynucleotide phosphatase activity toward 5'-phosphorylated ssDNA substrates although at a slow rate. Transphosphatidylase that catalyzes the exchange with R to S stereo-inversion of the glycerol moiety between (S,R)-lysophosphatidylglycerol (LPG) and monoacylglycerol (MAG) substrates to yield (S,S)-bis(monoacylglycero)phosphate (BMP). Can synthesize a variety of (S,S)-BMPs representing the main phospholipid constituent of lysosomal intralumenal vesicle (ILV) membranes that bind acid hydrolases for lipid degradation. Regulates the homeostasis and interorganellar communication of the endolysosomal system with an overall impact on cellular removal of dysfunctional organelles via autophagy as well as proper protein and lipid turnover. May play a role in myotube formation in response to ER stress. This Bos taurus (Bovine) protein is 5'-3' exonuclease PLD3 (PLD3).